The primary structure comprises 217 residues: Snake venom metalloproteinase lebetase-4 (217 aa).

A propeptide spanning residues 1-14 (SCRKKASQLNLTPE) is cleaved from the precursor. Position 15 is a pyrrolidone carboxylic acid (glutamine 15). Positions 21–217 (RYIELVIVAD…HNPQCILNQP (197 aa)) constitute a Peptidase M12B domain. Glutamate 24 and aspartate 108 together coordinate Ca(2+). 3 disulfide bridges follow: cysteine 132–cysteine 212, cysteine 172–cysteine 196, and cysteine 174–cysteine 179. Residue histidine 157 participates in Zn(2+) binding. Glutamate 158 is a catalytic residue. 2 residues coordinate Zn(2+): histidine 161 and histidine 167. 2 residues coordinate Ca(2+): cysteine 212 and asparagine 215.

It belongs to the venom metalloproteinase (M12B) family. P-I subfamily. In terms of assembly, monomer. Requires Zn(2+) as cofactor. In terms of tissue distribution, expressed by the venom gland.

It is found in the secreted. With respect to regulation, fibrinolytic and caseinolytic activities are inhibited by Cd(2+), Cu(2+) and Co(2+) ions. Not inhibited by Mg(2+), Ca(2+) and Ba(2+). Also inhibited by EDTA, EGTA and 1,10-phenanthroline. Functionally, snake venom zinc metalloprotease that hydrolyzes the Aalpha-chain and more slowly the Bbeta-chain of fibrin and fibrinogen. Also hydrolyzes casein and B-chain of oxidized insulin. Its fibrinolytic activity is direct, without any plasminogen activation. Inhibits ADP-induced and collagen-induced platelet aggregation. Shows low hemorrhagic activity. Cleaves the plasma proteinase inhibitors alpha(2)-macroglobulin (A2M) and alpha(2)M-related pregnancy zone protein (PZP), and is inhibited by them. The chain is Snake venom metalloproteinase lebetase-4 from Macrovipera lebetinus (Levantine viper).